The chain runs to 363 residues: Pyrimidine monooxygenase RutA (363 aa).

FMN contacts are provided by residues 49–50 (IK), Asn-115, Glu-124, 140–141 (RY), and Ser-190.

The protein belongs to the NtaA/SnaA/DszA monooxygenase family. RutA subfamily.

The catalysed reaction is uracil + FMNH2 + NADH + O2 = (Z)-3-ureidoacrylate + FMN + NAD(+) + H2O + H(+). It catalyses the reaction thymine + FMNH2 + NADH + O2 = (Z)-2-methylureidoacrylate + FMN + NAD(+) + H2O + H(+). Catalyzes the pyrimidine ring opening between N-3 and C-4 by an unusual flavin hydroperoxide-catalyzed mechanism, adding oxygen atoms in the process to yield ureidoacrylate peracid, that immediately reacts with FMN forming ureidoacrylate and FMN-N(5)-oxide. The FMN-N(5)-oxide reacts spontaneously with NADH to produce FMN. Requires the flavin reductase RutF to regenerate FMN in vivo. In Klebsiella variicola (strain At-22), this protein is Pyrimidine monooxygenase RutA.